The chain runs to 1398 residues: MNQEVMNLFNPQAPAQVFDSIRISLASPEKILSWSFGEIKKPETINYRTFKPERDGLFCARIFGPIKDYECLCGKYKRMKYKGVICEKCGVEVTLSRVRRERMGHIELAAPVAHIWFLKSLPSRIGTLLDMTLKDIERVLYFENYIVTEPGLTALKEHQLLSEEEYMIAVDEYGEDSFTAMIGAEAIHDLLAGMDLEKIAGDLRSELASTTSELKQKKYLKRLKVVENFMESGNRPEWMIMKVVPVIPPDLRPLVPLDGGRFATSDLNDLYRRVINRNNRLKRLIELRAPGIIVRNEKRMLQEAVDALFDNGRRGRVITGANKRPLKSLSDMLKGKQGRFRQNLLGKRVDYSGRSVIVTGPELKLHQCGLPKKMALELFKPFIYARLDAKGYSSTVKQAKKLVEKERPEVWDILDEVIREHPVLLNRAPTLHRLGIQAFEPILIEGKAIQLHPLVCTAFNADFDGDQMAVHVPLSLEAQLEARVLMMSTNNILHPASGAPIIVPSQDMVLGLYYLSIVNQNEPGEGMVFADMGELQHALETKAVTLHAKIKGRFRTVDAEGKVVSKIHDTTPGRMIIGELLPKNVNVPYETANQEMTKKNISKMIDTVYRHCGQKETVIFCDRIMALGFAHACRAGISFGKDDMLIPDSKIKLVSDTEALAKEYEQQYNDGLITQGEKYNKVVDAWAKCSEKVADEMMARIKAVEFEDNGRQKPMNSIYMMSHSGARGSPTQMRQLAGMRGLMAKPSGEIIETPIISNFKEGLTVLEYFNSTHGARKGLADTALKTANSGYLTRRLVDVAQDCIVNSVDCGTDKGLTMQPIVDAGQVVASVGQRVLGRTALDDINHPVTGDLLVKAGTLMDERDVEQIEKAGVQSVRIRSALTCEVRVGVCAVCYGRDLARGTPVNQGEAVGVIAAQSIGEPGTQLTMRTFHMGGTAQVVDSSFLEASYEGKVEIRNRNVVRNSDGQQMVMGRNMAVLILDEAGKERATHRVTYGSRIFVDDGDKVKRGQRIAEWDPYTRPILTEIEGRVAFEDLVDGISVQETADESTGITKREVIDWRSTPRGNDLKPAIVVQDAKGKVGKLSKGGDARFLLSVEAILSVEPGAQVRPGDVLARIPMESAKTKDITGGLPRVAELFEARRPKDHAIIAEIDGTIRFGRDYKNKRRIIIEPHDSTLEPVEYLIPKGKPFHLQDGDVIEKGDYILDGNPAPHDILAIKGVEALASYLVNEIQEVYRLQGVSINDKHIEVIVRQMLQKVEITTQGDSTYIPGDHVDVIELEEVNERLIEDGKKPAEGQPVLLGITKASLQTPSFISAASFQETTRVLTEAAVAGKTDMLQGLKENVIVGRLIPAGTGGTMSQIRRIATSRDELIIDERRKASGVEVAEPMLADMTTAAQ.

Residues Cys71, Cys73, Cys86, and Cys89 each contribute to the Zn(2+) site. Mg(2+)-binding residues include Asp462, Asp464, and Asp466. 4 residues coordinate Zn(2+): Cys810, Cys884, Cys891, and Cys894.

Belongs to the RNA polymerase beta' chain family. The RNAP catalytic core consists of 2 alpha, 1 beta, 1 beta' and 1 omega subunit. When a sigma factor is associated with the core the holoenzyme is formed, which can initiate transcription. The cofactor is Mg(2+). Requires Zn(2+) as cofactor.

It carries out the reaction RNA(n) + a ribonucleoside 5'-triphosphate = RNA(n+1) + diphosphate. In terms of biological role, DNA-dependent RNA polymerase catalyzes the transcription of DNA into RNA using the four ribonucleoside triphosphates as substrates. This chain is DNA-directed RNA polymerase subunit beta', found in Mesorhizobium japonicum (strain LMG 29417 / CECT 9101 / MAFF 303099) (Mesorhizobium loti (strain MAFF 303099)).